Here is a 339-residue protein sequence, read N- to C-terminus: UPF0324 membrane protein CPE0129 (339 aa).

8 helical membrane-spanning segments follow: residues 12-30, 35-54, 90-112, 122-144, 156-178, 210-232, 259-281, and 316-338; these read ILPGLFICLIIGIIAEFLG, TIGAATFAIFMGIFLGNTLF, LGFNGVFYIAILMTLTICTTYFI, YSLLMSAGNAVCGSSAIGSVSPV, ITIVNVTGTILMILLPLITSILY, VVELATVFKIIRIIFLVVVVLVF, WFIIGFFIICILNSIGIIPGILG, and MLYGGLVGVCQIIFALSLINIFI.

This sequence belongs to the UPF0324 family.

It localises to the cell membrane. This Clostridium perfringens (strain 13 / Type A) protein is UPF0324 membrane protein CPE0129.